The primary structure comprises 1438 residues: DNA polymerase III PolC-type (1438 aa).

The 157-residue stretch at 422 to 578 (YVVFDVETTG…YDTEATAYIF (157 aa)) folds into the Exonuclease domain.

This sequence belongs to the DNA polymerase type-C family. PolC subfamily.

Its subcellular location is the cytoplasm. It catalyses the reaction DNA(n) + a 2'-deoxyribonucleoside 5'-triphosphate = DNA(n+1) + diphosphate. Required for replicative DNA synthesis. This DNA polymerase also exhibits 3' to 5' exonuclease activity. In Staphylococcus aureus (strain Mu3 / ATCC 700698), this protein is DNA polymerase III PolC-type.